We begin with the raw amino-acid sequence, 365 residues long: Phospho-N-acetylmuramoyl-pentapeptide-transferase (365 aa).

11 helical membrane passes run 15-35, 39-59, 84-104, 114-134, 156-176, 178-198, 209-229, 235-255, 263-283, 291-311, and 343-363; these read WPAA…DRLI, LLSL…WWGV, GTPT…GGLV, LLAI…DDWS, AAVL…TVSL, FNLD…VFLA, LDGL…LQLM, GDPA…GFLI, VFMG…VALL, LLMG…VWVF, and VVVP…LGLH.

It belongs to the glycosyltransferase 4 family. MraY subfamily. It depends on Mg(2+) as a cofactor.

The protein localises to the cell inner membrane. The enzyme catalyses UDP-N-acetyl-alpha-D-muramoyl-L-alanyl-gamma-D-glutamyl-meso-2,6-diaminopimeloyl-D-alanyl-D-alanine + di-trans,octa-cis-undecaprenyl phosphate = di-trans,octa-cis-undecaprenyl diphospho-N-acetyl-alpha-D-muramoyl-L-alanyl-D-glutamyl-meso-2,6-diaminopimeloyl-D-alanyl-D-alanine + UMP. Its pathway is cell wall biogenesis; peptidoglycan biosynthesis. In terms of biological role, catalyzes the initial step of the lipid cycle reactions in the biosynthesis of the cell wall peptidoglycan: transfers peptidoglycan precursor phospho-MurNAc-pentapeptide from UDP-MurNAc-pentapeptide onto the lipid carrier undecaprenyl phosphate, yielding undecaprenyl-pyrophosphoryl-MurNAc-pentapeptide, known as lipid I. In Synechococcus sp. (strain WH7803), this protein is Phospho-N-acetylmuramoyl-pentapeptide-transferase.